A 138-amino-acid chain; its full sequence is Lymphocyte antigen 6L (138 aa).

An N-terminal signal peptide occupies residues 1–16 (MERLVLTLCTLPLAVA). Asn-27 carries N-linked (GlcNAc...) asparagine glycosylation. A UPAR/Ly6 domain is found at 28–122 (LSCYQCFKVS…TPQEGRWALR (95 aa)). 2 disulfide bridges follow: Cys-30-Cys-47 and Cys-103-Cys-108. Gly-117 carries the GPI-anchor amidated glycine lipid modification. Positions 118–138 (RWALRGGLLLQVGLSLLRALL) are cleaved as a propeptide — removed in mature form.

Its subcellular location is the cell membrane. In Homo sapiens (Human), this protein is Lymphocyte antigen 6L.